A 596-amino-acid chain; its full sequence is tRNA(Met) cytidine acetyltransferase TmcA (596 aa).

ATP is bound by residues glutamine 138, 160–169 (GRGKSTLAGK), and arginine 285. Positions 328-481 (SDLRRLFDAQ…SGYHSAMMLY (154 aa)) constitute an N-acetyltransferase domain. Acetyl-CoA-binding positions include 406–408 (IAV) and 413–419 (QKQGIGK).

It belongs to the RNA cytidine acetyltransferase family. TmcA subfamily.

It localises to the cytoplasm. The enzyme catalyses cytidine(34) in elongator tRNA(Met) + acetyl-CoA + ATP + H2O = N(4)-acetylcytidine(34) in elongator tRNA(Met) + ADP + phosphate + CoA + H(+). Functionally, catalyzes the formation of N(4)-acetylcytidine (ac(4)C) at the wobble position of tRNA(Met), by using acetyl-CoA as an acetyl donor and ATP (or GTP). This is tRNA(Met) cytidine acetyltransferase TmcA from Actinobacillus pleuropneumoniae serotype 5b (strain L20).